The following is a 108-amino-acid chain: Thiosulfate sulfurtransferase GlpE (108 aa).

The 89-residue stretch at 17-105 (RQGAAVLVDI…WHRRFPANVA (89 aa)) folds into the Rhodanese domain. The active-site Cysteine persulfide intermediate is Cys65.

It belongs to the GlpE family.

The protein resides in the cytoplasm. The catalysed reaction is thiosulfate + hydrogen cyanide = thiocyanate + sulfite + 2 H(+). It carries out the reaction thiosulfate + [thioredoxin]-dithiol = [thioredoxin]-disulfide + hydrogen sulfide + sulfite + 2 H(+). Its function is as follows. Transferase that catalyzes the transfer of sulfur from thiosulfate to thiophilic acceptors such as cyanide or dithiols. May function in a CysM-independent thiosulfate assimilation pathway by catalyzing the conversion of thiosulfate to sulfite, which can then be used for L-cysteine biosynthesis. The sequence is that of Thiosulfate sulfurtransferase GlpE from Salmonella agona (strain SL483).